A 418-amino-acid polypeptide reads, in one-letter code: Probable serine/threonine-protein kinase DDB_G0280461 (418 aa).

In terms of domain architecture, Protein kinase spans 14-271; the sequence is KIEENEFSKG…IVQTLDQLAI (258 aa). Residues 20 to 28 and K41 contribute to the ATP site; that span reads FSKGSFAKV. D139 acts as the Proton acceptor in catalysis. Disordered stretches follow at residues 327-356 and 377-418; these read NNNN…NNNN and SVNS…CLIN. Low complexity predominate over residues 377-402; that stretch reads SVNSSFSNSSLGSNGSNSSGTSTSSG. Basic residues predominate over residues 403–418; the sequence is GKKRSQKRKSWKCLIN.

The protein belongs to the protein kinase superfamily. TKL Ser/Thr protein kinase family.

The enzyme catalyses L-seryl-[protein] + ATP = O-phospho-L-seryl-[protein] + ADP + H(+). The catalysed reaction is L-threonyl-[protein] + ATP = O-phospho-L-threonyl-[protein] + ADP + H(+). The polypeptide is Probable serine/threonine-protein kinase DDB_G0280461 (Dictyostelium discoideum (Social amoeba)).